The sequence spans 367 residues: 3-isopropylmalate dehydrogenase (367 aa).

NAD(+) is bound at residue 77-90; it reads GPKYDDLDFSVKPE. Positions 97, 107, 135, and 224 each coordinate substrate. Residues D224, D248, and D252 each contribute to the Mg(2+) site. 287 to 299 is an NAD(+) binding site; that stretch reads GSAPDIAGQGKAN.

It belongs to the isocitrate and isopropylmalate dehydrogenases family. LeuB type 1 subfamily. As to quaternary structure, homodimer. Mg(2+) is required as a cofactor. The cofactor is Mn(2+).

The protein localises to the cytoplasm. It catalyses the reaction (2R,3S)-3-isopropylmalate + NAD(+) = 4-methyl-2-oxopentanoate + CO2 + NADH. Its pathway is amino-acid biosynthesis; L-leucine biosynthesis; L-leucine from 3-methyl-2-oxobutanoate: step 3/4. In terms of biological role, catalyzes the oxidation of 3-carboxy-2-hydroxy-4-methylpentanoate (3-isopropylmalate) to 3-carboxy-4-methyl-2-oxopentanoate. The product decarboxylates to 4-methyl-2 oxopentanoate. The sequence is that of 3-isopropylmalate dehydrogenase from Ruegeria pomeroyi (strain ATCC 700808 / DSM 15171 / DSS-3) (Silicibacter pomeroyi).